Here is a 326-residue protein sequence, read N- to C-terminus: Acetyl-coenzyme A carboxylase carboxyl transferase subunit beta (326 aa).

Positions leucine 29–threonine 298 constitute a CoA carboxyltransferase N-terminal domain. Positions 33, 36, 52, and 55 each coordinate Zn(2+). The segment at cysteine 33 to cysteine 55 adopts a C4-type zinc-finger fold. Residues cysteine 302 to glycine 326 form a disordered region. A compositionally biased stretch (polar residues) spans glutamate 309 to glycine 326.

This sequence belongs to the AccD/PCCB family. Acetyl-CoA carboxylase is a heterohexamer composed of biotin carboxyl carrier protein (AccB), biotin carboxylase (AccC) and two subunits each of ACCase subunit alpha (AccA) and ACCase subunit beta (AccD). It depends on Zn(2+) as a cofactor.

It localises to the cytoplasm. It catalyses the reaction N(6)-carboxybiotinyl-L-lysyl-[protein] + acetyl-CoA = N(6)-biotinyl-L-lysyl-[protein] + malonyl-CoA. It functions in the pathway lipid metabolism; malonyl-CoA biosynthesis; malonyl-CoA from acetyl-CoA: step 1/1. Functionally, component of the acetyl coenzyme A carboxylase (ACC) complex. Biotin carboxylase (BC) catalyzes the carboxylation of biotin on its carrier protein (BCCP) and then the CO(2) group is transferred by the transcarboxylase to acetyl-CoA to form malonyl-CoA. In Trichodesmium erythraeum (strain IMS101), this protein is Acetyl-coenzyme A carboxylase carboxyl transferase subunit beta.